Consider the following 228-residue polypeptide: Leucokinins (228 aa).

Residues 1–18 form the signal peptide; that stretch reads MAMLLQVALPLLAAVSWG. A propeptide spanning residues 19–164 is cleaved from the precursor; that stretch reads WELNENDDSL…PRFSPVSAIQ (146 aa). The interval 80 to 118 is disordered; the sequence is EFSENNEAEDKSPTSAQNTQEHIPGNNFPPPAASNPPVN. Glycine 180 and glycine 193 each carry glycine amide. Positions 197–209 are excised as a propeptide; sequence NTGRVHRQPKVVI. Glycine 217 is modified (glycine amide). A propeptide spanning residues 221–228 is cleaved from the precursor; that stretch reads NQKDDNVF.

It is found in the secreted. Stimulates both fluid secretion by the Malpighian tubules and hindgut contractions. Depolarize the transepithelial voltage of the Malpighian tubules in concentrations of less than 10(-9) M and increase the frequency of hindgut contractions at concentrations above 10(-8) M. The chain is Leucokinins from Aedes aegypti (Yellowfever mosquito).